A 449-amino-acid chain; its full sequence is Methylenetetrahydrofolate--tRNA-(uracil-5-)-methyltransferase TrmFO (449 aa).

An FAD-binding site is contributed by 9 to 14; that stretch reads GGGIAG.

The protein belongs to the MnmG family. TrmFO subfamily. FAD is required as a cofactor.

It is found in the cytoplasm. The enzyme catalyses uridine(54) in tRNA + (6R)-5,10-methylene-5,6,7,8-tetrahydrofolate + NADH + H(+) = 5-methyluridine(54) in tRNA + (6S)-5,6,7,8-tetrahydrofolate + NAD(+). It carries out the reaction uridine(54) in tRNA + (6R)-5,10-methylene-5,6,7,8-tetrahydrofolate + NADPH + H(+) = 5-methyluridine(54) in tRNA + (6S)-5,6,7,8-tetrahydrofolate + NADP(+). Catalyzes the folate-dependent formation of 5-methyl-uridine at position 54 (M-5-U54) in all tRNAs. The polypeptide is Methylenetetrahydrofolate--tRNA-(uracil-5-)-methyltransferase TrmFO (Gloeobacter violaceus (strain ATCC 29082 / PCC 7421)).